Consider the following 793-residue polypeptide: MSYVSGYVPVIPLKNSVLFPDISMPLRIGREKSIAALQKALRDNHWVILLTQKNPNASVDKIEDLYQVGTLAKVESFRMEEDGSYNIFVKAHQRVRLIHSRDSEGHIEAQTEALEDSGRLDKKTEEALLSSLRQLSDDLLDLLPGNTRQIREMIAEIEDLQTLVNMCAAYADINISDKQEILEIPLLKDRALKLLDRLQELKERLKIQRGIRDKLQESFQQNQKESILREQMRVIREELGDHEGEDLFAKFKDKIDKAGMPPEALELAKNQLRRLETSNSASPEYQMIRTHLELMTSLPWNQSSAQQDIDLEAAERVLNEDHYGLEKIKKRILQHLAVMKLRKSQQGSILMFIGPPGVGKTSLGKSIARALGKKYVRVALGGVRDDAEIRGHRRTYIGALPGRIIAGIKKAGENDPVFILDEIDKLTRGFGGDPASAMLEVLDPEQNNTFQDHYLDTPFDLSKVFFIATANSLEGIPLPLLDRMEVIDLSGYTVDEKRQIARSHLWPKQLKEHGLEENQLQITDQALTKLLTHYTREAGVRDLQRKIASICKHMSLKIIKSEGLPLLVEEQDLEDIFGAERFSADMIGSLLPPGVVTGLAWTPVGGDILFIESAQMPGKGNLLLTGQLGEVMQESAKIALTLLKSRLPLLDPLLDFAKKDIHVHVPAGAIPKDGPSAGITMLTSMASMLLNKPVDPKVAMTGEISLRGSVMPVGGIKEKVIAAHRAGVQEILLCKRNEKDLREIPEDIRKDLRFHFVEDVNEVLKITLGVNVPKWDQVQLPPPSPLSSTDAGT.

The region spanning 8-202 (VPVIPLKNSV…KLLDRLQELK (195 aa)) is the Lon N-terminal domain. 354–361 (GPPGVGKT) serves as a coordination point for ATP. In terms of domain architecture, Lon proteolytic spans 590 to 770 (LLPPGVVTGL…NEVLKITLGV (181 aa)). Active-site residues include S676 and K719.

Belongs to the peptidase S16 family. In terms of assembly, homohexamer. Organized in a ring with a central cavity.

The protein resides in the cytoplasm. It carries out the reaction Hydrolysis of proteins in presence of ATP.. ATP-dependent serine protease that mediates the selective degradation of mutant and abnormal proteins as well as certain short-lived regulatory proteins. Required for cellular homeostasis and for survival from DNA damage and developmental changes induced by stress. Degrades polypeptides processively to yield small peptide fragments that are 5 to 10 amino acids long. Binds to DNA in a double-stranded, site-specific manner. This chain is Lon protease 1, found in Bdellovibrio bacteriovorus (strain ATCC 15356 / DSM 50701 / NCIMB 9529 / HD100).